The chain runs to 461 residues: MNLQIIILAAGQGKRMYSDTPKVLHHLAGKPLLTHVVETAQQLNPDAIHVIYGHGGEQIKSSLPNLPVHWVHQAEQLGTGHAVLQAMPHIPDDAYVLVLSADVPLIQVGTLQSLIECSQRQNPDHSVLALLVAELENPSGLGRIIRNNQGEIYSIVEEKDANEQVKNIKEIYSGVCCTLANNLKKWLPQLSNSNAQGEYYLTEIISLAVQNKTPITSLTAKNSFEVQGINNRQQLQQLERIWQQRAANQLMEKGATLADANRFDLRGELYCGKDVYIDINCIFTGTVVLGNGCKIGPNCSLTNVTLGDGCEVYANSVLEGCHIANDCHIGPFARLRSGTQLASHCKIGNFVETKKAIFDEGTKASHLSYLGDVLLGKNVNVGAGTITCNYDGVNKHQTIIEDGVFIGSDTQLVAPVTVGANATIGAGSTIRRNVPPDELTLTESRQKTIYGWKRPVKRERD.

The interval 1-232 (MNLQIIILAA…SFEVQGINNR (232 aa)) is pyrophosphorylase. Residues 8 to 11 (LAAG), lysine 22, glutamine 73, and 78 to 79 (GT) contribute to the UDP-N-acetyl-alpha-D-glucosamine site. Aspartate 102 is a Mg(2+) binding site. Positions 142, 157, and 230 each coordinate UDP-N-acetyl-alpha-D-glucosamine. Asparagine 230 provides a ligand contact to Mg(2+). The tract at residues 233–253 (QQLQQLERIWQQRAANQLMEK) is linker. The interval 254 to 461 (GATLADANRF…WKRPVKRERD (208 aa)) is N-acetyltransferase. UDP-N-acetyl-alpha-D-glucosamine-binding residues include arginine 336 and lysine 354. Catalysis depends on histidine 366, which acts as the Proton acceptor. Residues tyrosine 369 and asparagine 380 each contribute to the UDP-N-acetyl-alpha-D-glucosamine site. Residues alanine 383, 389–390 (NY), serine 408, and alanine 426 each bind acetyl-CoA.

In the N-terminal section; belongs to the N-acetylglucosamine-1-phosphate uridyltransferase family. This sequence in the C-terminal section; belongs to the transferase hexapeptide repeat family. In terms of assembly, homotrimer. It depends on Mg(2+) as a cofactor.

It localises to the cytoplasm. It catalyses the reaction alpha-D-glucosamine 1-phosphate + acetyl-CoA = N-acetyl-alpha-D-glucosamine 1-phosphate + CoA + H(+). The catalysed reaction is N-acetyl-alpha-D-glucosamine 1-phosphate + UTP + H(+) = UDP-N-acetyl-alpha-D-glucosamine + diphosphate. It participates in nucleotide-sugar biosynthesis; UDP-N-acetyl-alpha-D-glucosamine biosynthesis; N-acetyl-alpha-D-glucosamine 1-phosphate from alpha-D-glucosamine 6-phosphate (route II): step 2/2. It functions in the pathway nucleotide-sugar biosynthesis; UDP-N-acetyl-alpha-D-glucosamine biosynthesis; UDP-N-acetyl-alpha-D-glucosamine from N-acetyl-alpha-D-glucosamine 1-phosphate: step 1/1. Its pathway is bacterial outer membrane biogenesis; LPS lipid A biosynthesis. In terms of biological role, catalyzes the last two sequential reactions in the de novo biosynthetic pathway for UDP-N-acetylglucosamine (UDP-GlcNAc). The C-terminal domain catalyzes the transfer of acetyl group from acetyl coenzyme A to glucosamine-1-phosphate (GlcN-1-P) to produce N-acetylglucosamine-1-phosphate (GlcNAc-1-P), which is converted into UDP-GlcNAc by the transfer of uridine 5-monophosphate (from uridine 5-triphosphate), a reaction catalyzed by the N-terminal domain. This Legionella pneumophila (strain Corby) protein is Bifunctional protein GlmU.